Here is a 72-residue protein sequence, read N- to C-terminus: Sec-independent protein translocase protein TatA (72 aa).

The chain crosses the membrane as a helical span at residues 1-21; sequence MLGGISIWQLLIVLAILVLIF.

Belongs to the TatA/E family. The Tat system comprises two distinct complexes: a TatABC complex, containing multiple copies of TatA, TatB and TatC subunits, and a separate TatA complex, containing only TatA subunits. Substrates initially bind to the TatABC complex, which probably triggers association of the separate TatA complex to form the active translocon.

It localises to the cell inner membrane. In terms of biological role, part of the twin-arginine translocation (Tat) system that transports large folded proteins containing a characteristic twin-arginine motif in their signal peptide across membranes. TatA could form the protein-conducting channel of the Tat system. The polypeptide is Sec-independent protein translocase protein TatA (Marinomonas sp. (strain MWYL1)).